A 747-amino-acid polypeptide reads, in one-letter code: RNA polymerase II assembly factor rtp1 (747 aa).

HEAT repeat units follow at residues 37 to 75, 103 to 141, 320 to 358, 381 to 418, 459 to 485, 486 to 523, and 557 to 594; these read NYFLNLLEEISKLDTDQPLSVTSLRCLQLFVHLTFLLGV, QIYNILLPLLLTPSLLQGPLNLHYADLLLLHLYLLNCHE, DIIRICESCVPSLLHLQENTTLRSKVQDILLRIISVCGT, SQLAMFLPNLLEIWVQQPPDKRLELLELVQYALSNVDS, EENEEILLVLLNIISSVIGRNAELDLE, NPISSLLPALEQLSNYSNREISDLAKDVYKTLIQSKDD, and INPVRVLHVLINLLRDENSYVHLNVISAVVSLCDKYDD.

Belongs to the Tango6 family. As to quaternary structure, interacts with RNA polymerase II subunits. Interacts with nuclear pore complex subunits.

The protein resides in the cytoplasm. The protein localises to the nucleus. In terms of biological role, required for the cytoplasmic assembly and the nuclear import of RNA polymerase II. This chain is RNA polymerase II assembly factor rtp1, found in Schizosaccharomyces pombe (strain 972 / ATCC 24843) (Fission yeast).